The primary structure comprises 122 residues: Large ribosomal subunit protein uL14 (122 aa).

The protein belongs to the universal ribosomal protein uL14 family. Part of the 50S ribosomal subunit. Forms a cluster with proteins L3 and L19. In the 70S ribosome, L14 and L19 interact and together make contacts with the 16S rRNA in bridges B5 and B8.

Binds to 23S rRNA. Forms part of two intersubunit bridges in the 70S ribosome. The polypeptide is Large ribosomal subunit protein uL14 (Chlorobium limicola (strain DSM 245 / NBRC 103803 / 6330)).